A 252-amino-acid polypeptide reads, in one-letter code: Triosephosphate isomerase (252 aa).

10–12 (NWK) lines the substrate pocket. Histidine 96 serves as the catalytic Electrophile. The active-site Proton acceptor is glutamate 168. Substrate is bound by residues glycine 174, serine 214, and 235–236 (GG).

It belongs to the triosephosphate isomerase family. In terms of assembly, homodimer.

The protein localises to the cytoplasm. The catalysed reaction is D-glyceraldehyde 3-phosphate = dihydroxyacetone phosphate. It functions in the pathway carbohydrate biosynthesis; gluconeogenesis. It participates in carbohydrate degradation; glycolysis; D-glyceraldehyde 3-phosphate from glycerone phosphate: step 1/1. Functionally, involved in the gluconeogenesis. Catalyzes stereospecifically the conversion of dihydroxyacetone phosphate (DHAP) to D-glyceraldehyde-3-phosphate (G3P). This is Triosephosphate isomerase from Lactobacillus acidophilus (strain ATCC 700396 / NCK56 / N2 / NCFM).